Reading from the N-terminus, the 166-residue chain is NADPH-dependent 7-cyano-7-deazaguanine reductase (166 aa).

Cys57 functions as the Thioimide intermediate in the catalytic mechanism. Residue Asp64 is the Proton donor of the active site. Residues 79–81 (VES) and 98–99 (HE) each bind substrate.

Belongs to the GTP cyclohydrolase I family. QueF type 1 subfamily.

The protein resides in the cytoplasm. It carries out the reaction 7-aminomethyl-7-carbaguanine + 2 NADP(+) = 7-cyano-7-deazaguanine + 2 NADPH + 3 H(+). It participates in tRNA modification; tRNA-queuosine biosynthesis. Its function is as follows. Catalyzes the NADPH-dependent reduction of 7-cyano-7-deazaguanine (preQ0) to 7-aminomethyl-7-deazaguanine (preQ1). The chain is NADPH-dependent 7-cyano-7-deazaguanine reductase from Staphylococcus aureus (strain MRSA252).